A 435-amino-acid chain; its full sequence is Diguanylate cyclase TpbB (435 aa).

Topologically, residues 1-22 are cytoplasmic; the sequence is MNRRRRYTGSNPSLRRVLYRAH. Residues 23 to 43 traverse the membrane as a helical segment; that stretch reads LGVALVAVFTAGLAVTLVGLL. Residues 44-154 lie on the Periplasmic side of the membrane; that stretch reads TLRAYADPNQ…VKGSGGSLLR (111 aa). Residues 155–175 traverse the membrane as a helical segment; that stretch reads FLLTGFAGMVLCLLLTALGAF. At 176–435 the chain is on the cytoplasmic side; it reads YLSRRLVRGI…DSATPEAPPK (260 aa). Residues 183-236 form the HAMP domain; that stretch reads RGIVGPLDQLAKVAHTVRRERDFEKRVPEAGIAELSQLGEDFNALLDELESWQA. The 137-residue stretch at 279-415 folds into the GGDEF domain; the sequence is EQLAVLFIDS…GSRRLAELND (137 aa). Positions 288 and 330 each coordinate Mg(2+). D330 serves as the catalytic Proton acceptor. The span at 414–426 shows a compositional bias: basic and acidic residues; sequence NDPRILQEEKEID. The interval 414-435 is disordered; that stretch reads NDPRILQEEKEIDSATPEAPPK.

It depends on Mg(2+) as a cofactor. Phosphorylated at both Tyr residues and Ser/Thr residues. Dephosphorylated and inactivated by TpbA.

It is found in the cell inner membrane. The enzyme catalyses 2 GTP = 3',3'-c-di-GMP + 2 diphosphate. The protein operates within purine metabolism; 3',5'-cyclic di-GMP biosynthesis. Activity is tightly controlled by YfiR, a small periplasmic protein, and the OmpA/Pal-like outer-membrane lipoprotein YfiB. Diguanylate cyclase activity is inhibited by the specific interaction of YfiR with the TpbB periplasmic domain and is activated by YfiB, which releases the YfiR-mediated repression through sequestration of YfiR to the outer membrane. Activity is also controlled by dephosphorylation of the periplasmic domain by the tyrosine phosphatase TpbA. Its function is as follows. Catalyzes the synthesis of cyclic-di-GMP (c-di-GMP) via the condensation of 2 GTP molecules. Important for the regulation of biofilm maintenance when exposed to peroxide. Part of the YfiB-TpbB-YfiR (or yfiBNR) system, encoding a tripartite signaling module that modulates intracellular c-di-GMP levels. The system is a key regulator of the small colony variant (SCV) phenotype, and plays an important role in biofilm formation and in vivo persistence. The c-di-GMP produced by TpbB/YfiN stimulates the production of the Pel and Psl exopolysaccharides, which promotes surface attachment, generates an SCV phenotype and confers resistance against phagocytosis. This is Diguanylate cyclase TpbB from Pseudomonas aeruginosa (strain UCBPP-PA14).